A 192-amino-acid polypeptide reads, in one-letter code: Large ribosomal subunit protein uL5 (192 aa).

The protein belongs to the universal ribosomal protein uL5 family. Part of the 50S ribosomal subunit; part of the 5S rRNA/L5/L18/L25 subcomplex. Contacts the 5S rRNA and the P site tRNA. Forms a bridge to the 30S subunit in the 70S ribosome.

Its function is as follows. This is one of the proteins that bind and probably mediate the attachment of the 5S RNA into the large ribosomal subunit, where it forms part of the central protuberance. In the 70S ribosome it contacts protein S13 of the 30S subunit (bridge B1b), connecting the 2 subunits; this bridge is implicated in subunit movement. Contacts the P site tRNA; the 5S rRNA and some of its associated proteins might help stabilize positioning of ribosome-bound tRNAs. This is Large ribosomal subunit protein uL5 from Zymomonas mobilis subsp. mobilis (strain ATCC 31821 / ZM4 / CP4).